A 475-amino-acid polypeptide reads, in one-letter code: Beta-amyrin 16-alpha-hydroxylase CYP87D16 (475 aa).

Residues 3–23 (VVGLIGVAVVTILITQYVYKW) traverse the membrane as a helical segment. C423 is a binding site for heme.

Belongs to the cytochrome P450 family. Heme is required as a cofactor.

The protein localises to the membrane. It catalyses the reaction beta-amyrin + reduced [NADPH--hemoprotein reductase] + O2 = 16alpha-hydroxy-beta-amyrin + oxidized [NADPH--hemoprotein reductase] + H2O + H(+). Involved in the biosynthetic pathway of maesasaponins, which are oleanane-type saponins with diverse biological activities. Catalyzes the C-16alpha oxidation of beta-amyrin to form 16alpha-hydroxy-beta-amyrin. The chain is Beta-amyrin 16-alpha-hydroxylase CYP87D16 from Maesa lanceolata (False assegai).